A 178-amino-acid polypeptide reads, in one-letter code: MSRVGKKLLEIPSGVTVTLNDNTVTVKGPKGELTRTFHPDMKIKIEDNVLTVERPSDNKEHRALHGTTRSIIGNMVEGVSKGFERGLELVGVGYRASKSGNKLVLNVGYSHPVEIVPENGIEIEVPSQTKVVVKGTDKERVGATAANIRAVRSPEPYKGKGIRYEGEMVRRKEGKSAK.

It belongs to the universal ribosomal protein uL6 family. Part of the 50S ribosomal subunit.

Functionally, this protein binds to the 23S rRNA, and is important in its secondary structure. It is located near the subunit interface in the base of the L7/L12 stalk, and near the tRNA binding site of the peptidyltransferase center. The polypeptide is Large ribosomal subunit protein uL6 (Bacillus licheniformis (strain ATCC 14580 / DSM 13 / JCM 2505 / CCUG 7422 / NBRC 12200 / NCIMB 9375 / NCTC 10341 / NRRL NRS-1264 / Gibson 46)).